The chain runs to 441 residues: MVLFSLVATHADIDLETVAQLSNGSSGIAASVLSGSPAVSGAVVLATCNRYEIYGEAPNTDDVEAARAALVAQISAQSGLAEPLVSRSFSTRTGPEVTRHLFAVSAGLDSAVVGEREIAGQVRRALITAQHEGTASSGLVRLFQAASKTAKDVGAQTALGSRGLSIVSVALDLATDLSENPDWSAKKVVVFGTGAYAGATMALLRERGCTDVSVFSSSGRAEGFVATRGGTALDADSLRPAVAAADVMIGCSGSDTRVEADELAQVRAGSAQPLIAIDLALTHDFDPAVGELNGVELLTLESVRLAAPQEQAESLAQASGIVKGAAKAFEQEREARSVDSAIVALRRHTMDVLDAEMEKVRARHGCTAAAEEVEFALRRMVKQLLHVPTVRARELAANGQQDDYVAALEALYGITVEQPGTAAPAAGQAECPVDHKGLESA.

Substrate is bound by residues 47-50, serine 110, 115-117, and glutamine 121; these read TCNR and ERE. Residue cysteine 48 is the Nucleophile of the active site. 192–197 serves as a coordination point for NADP(+); that stretch reads GTGAYA.

The protein belongs to the glutamyl-tRNA reductase family. In terms of assembly, homodimer.

The enzyme catalyses (S)-4-amino-5-oxopentanoate + tRNA(Glu) + NADP(+) = L-glutamyl-tRNA(Glu) + NADPH + H(+). It functions in the pathway porphyrin-containing compound metabolism; protoporphyrin-IX biosynthesis; 5-aminolevulinate from L-glutamyl-tRNA(Glu): step 1/2. Functionally, catalyzes the NADPH-dependent reduction of glutamyl-tRNA(Glu) to glutamate 1-semialdehyde (GSA). This Pseudarthrobacter chlorophenolicus (strain ATCC 700700 / DSM 12829 / CIP 107037 / JCM 12360 / KCTC 9906 / NCIMB 13794 / A6) (Arthrobacter chlorophenolicus) protein is Glutamyl-tRNA reductase.